The following is a 429-amino-acid chain: Adenylosuccinate synthetase (429 aa).

GTP is bound by residues 13-19 and 41-43; these read GDEGKGK and GHT. Asp-14 functions as the Proton acceptor in the catalytic mechanism. Mg(2+) is bound by residues Asp-14 and Gly-41. IMP-binding positions include 14–17, 39–42, Thr-130, Arg-144, Gln-224, Thr-239, and Arg-303; these read DEGK and NAGH. His-42 serves as the catalytic Proton donor. 299–305 is a binding site for substrate; sequence ATTGRAR. Residues Arg-305, 331 to 333, and 412 to 414 contribute to the GTP site; these read KLD and STG.

This sequence belongs to the adenylosuccinate synthetase family. In terms of assembly, homodimer. The cofactor is Mg(2+).

The protein localises to the cytoplasm. The catalysed reaction is IMP + L-aspartate + GTP = N(6)-(1,2-dicarboxyethyl)-AMP + GDP + phosphate + 2 H(+). The protein operates within purine metabolism; AMP biosynthesis via de novo pathway; AMP from IMP: step 1/2. Its function is as follows. Plays an important role in the de novo pathway of purine nucleotide biosynthesis. Catalyzes the first committed step in the biosynthesis of AMP from IMP. In Psychrobacter arcticus (strain DSM 17307 / VKM B-2377 / 273-4), this protein is Adenylosuccinate synthetase.